A 542-amino-acid chain; its full sequence is Glutamyl-tRNA(Gln) amidotransferase subunit A, mitochondrial (542 aa).

Active-site charge relay system residues include Lys55 and Ser143. The Acyl-ester intermediate role is filled by Ser167.

The protein belongs to the amidase family. GatA subfamily. Subunit of the heterotrimeric GatCAB amidotransferase (AdT) complex, composed of A, B and C subunits.

The protein localises to the mitochondrion. It carries out the reaction L-glutamyl-tRNA(Gln) + L-glutamine + ATP + H2O = L-glutaminyl-tRNA(Gln) + L-glutamate + ADP + phosphate + H(+). In terms of biological role, allows the formation of correctly charged Gln-tRNA(Gln) through the transamidation of misacylated Glu-tRNA(Gln) in the mitochondria. The reaction takes place in the presence of glutamine and ATP through an activated gamma-phospho-Glu-tRNA(Gln). The polypeptide is Glutamyl-tRNA(Gln) amidotransferase subunit A, mitochondrial (Neurospora crassa (strain ATCC 24698 / 74-OR23-1A / CBS 708.71 / DSM 1257 / FGSC 987)).